The chain runs to 332 residues: Sesquiterpene synthase MBR_10393 (332 aa).

Positions 91 and 96 each coordinate Mg(2+). Residues 91–96 (DDLFVD) carry the DDXXXD motif motif. Arginine 184 is a substrate binding site. Positions 230, 234, and 238 each coordinate Mg(2+).

This sequence belongs to the terpene synthase family. Requires Mg(2+) as cofactor.

The catalysed reaction is (2E,6E)-farnesyl diphosphate + H2O = (+)-corvol ether B + diphosphate. It catalyses the reaction (2E,6E)-farnesyl diphosphate + H2O = (+)-corvol ether A + diphosphate. Functionally, terpene synthase that catalyzes the conversion of (2E,6E)-farnesyl diphosphate (FPP) into sesquiterpenes which are important for fungi-environment interactions. Produces a mixture consisting of 8 sesquiterpenes including corvol ethers A and B, as well as traces of epizonarene, gamma-cadinene, delta-cadinene, alpha-cadinene, alpha-cadinol, and an unidentified sesquiterpene. The major product is corvol ether B. This chain is Sesquiterpene synthase MBR_10393, found in Metarhizium brunneum (strain ARSEF 3297).